The chain runs to 177 residues: Small ribosomal subunit protein uS4 (177 aa).

The S4 RNA-binding domain occupies 104–168 (RRLQTLVFRK…SPMASESHPE (65 aa)). Positions 157-177 (PNSPMASESHPERTDSVKDAE) are disordered. Positions 165 to 177 (SHPERTDSVKDAE) are enriched in basic and acidic residues.

It belongs to the universal ribosomal protein uS4 family. In terms of assembly, part of the 30S ribosomal subunit. Contacts protein S5. The interaction surface between S4 and S5 is involved in control of translational fidelity.

In terms of biological role, one of the primary rRNA binding proteins, it binds directly to 16S rRNA where it nucleates assembly of the body of the 30S subunit. Its function is as follows. With S5 and S12 plays an important role in translational accuracy. This is Small ribosomal subunit protein uS4 from Methanococcus aeolicus (strain ATCC BAA-1280 / DSM 17508 / OCM 812 / Nankai-3).